The following is a 147-amino-acid chain: Peptidyl-lysine N-acetyltransferase YjaB (147 aa).

In terms of domain architecture, N-acetyltransferase spans 3–144 (ISIRRSRHEE…KPYPLLNLAY (142 aa)).

The protein belongs to the acetyltransferase family.

It carries out the reaction L-lysyl-[protein] + acetyl-CoA = N(6)-acetyl-L-lysyl-[protein] + CoA + H(+). N-epsilon-lysine acetyltransferase that catalyzes acetylation of a large number of proteins. Binds acetyl-CoA. In Escherichia coli (strain K12), this protein is Peptidyl-lysine N-acetyltransferase YjaB (yjaB).